A 153-amino-acid polypeptide reads, in one-letter code: D-aminoacyl-tRNA deacylase (153 aa).

A Gly-cisPro motif, important for rejection of L-amino acids motif is present at residues 137-138 (GP).

This sequence belongs to the DTD family. In terms of assembly, homodimer.

It is found in the cytoplasm. The catalysed reaction is glycyl-tRNA(Ala) + H2O = tRNA(Ala) + glycine + H(+). It carries out the reaction a D-aminoacyl-tRNA + H2O = a tRNA + a D-alpha-amino acid + H(+). Its function is as follows. An aminoacyl-tRNA editing enzyme that deacylates mischarged D-aminoacyl-tRNAs. Also deacylates mischarged glycyl-tRNA(Ala), protecting cells against glycine mischarging by AlaRS. Acts via tRNA-based rather than protein-based catalysis; rejects L-amino acids rather than detecting D-amino acids in the active site. By recycling D-aminoacyl-tRNA to D-amino acids and free tRNA molecules, this enzyme counteracts the toxicity associated with the formation of D-aminoacyl-tRNA entities in vivo and helps enforce protein L-homochirality. This is D-aminoacyl-tRNA deacylase from Methylococcus capsulatus (strain ATCC 33009 / NCIMB 11132 / Bath).